Reading from the N-terminus, the 664-residue chain is MGRIVGIDLGTTNSVVAVLEAGRPQVIANAEGSRTTPSVVGYSKEAELLVGQLARRQLVLNPRNTFANLKRFVGRGWDEMDDSSLSVPYTVRANEQGNVRVSCQVTEREYAPEELVASIIRKLVDDAATYLGEPVEAAVVTVPAYFNDAQRQATRDAGRLAGITVERILNEPTAAALAYGFDRSAARRVLVFDLGGGTFDVSLMRVANGVFDVKATCGDTQLGGNDFDQRIVDWLAEAFKTKHGLDLRRDRQALQRLIEAAEKAKQELSGVLSTPISLPFIATGPDGPLHIETSLDRPTFEGLCPDLLDRLLNPVQTALRDSGWSADDVDDVVLVGGGTRMPMVQQLLRTLVASEPCQSVNPDEVVAVGGAVQAGILTGELRDLMLNDVTPLSLGLETVGGLMKVLIPRNTPIPVRQSDVFSTSEANQSSVEIHVWQGERQLAADNKSLGRFRLSGIPPAPRGVPQVQVAFDIDANGLLQVSATDRTTGRKQSVNIQGGSTLNEEELQALLAEAEAKAGEDRRRRASIDRRNSALTLVGQAERRLRDAALELGPYGAERQQRAVETAMRDVQDLLEQNDLQELELAVASLQEALFGLNRRISSERRTDANPLQGIRNTLGSLKDELFSDDDWDEDPWNSPARSSDGRRIYRGRELNPWDDDFYR.

A Phosphothreonine; by autocatalysis modification is found at Thr-198.

The protein belongs to the heat shock protein 70 family.

Its function is as follows. Acts as a chaperone. This chain is Chaperone protein dnaK1 (dnaK1), found in Prochlorococcus marinus (strain MIT 9313).